Here is a 469-residue protein sequence, read N- to C-terminus: Coiled-coil domain-containing protein 6 (469 aa).

Positions 1–10 are enriched in acidic residues; it reads MADSASESDT. The disordered stretch occupies residues 1–37; sequence MADSASESDTDAAGGGPAAMQSSCSATSGGSGGGGGG. A2 is subject to N-acetylalanine. A Phosphoserine modification is found at S45. Residues 47 to 320 adopt a coiled-coil conformation; sequence FRLEELTNRL…LCRQLSESES (274 aa). Repeat copies occupy residues 99 to 127, 128 to 156, and 157 to 185. Residues 99–228 are 5 X 29 AA tandem repeats; the sequence is EQEEEFISNT…AEKRILQEKL (130 aa). Residues 186-199 form a 4; approximate repeat; it reads EQLRREKIDLENTL. Repeat unit 5 spans residues 200 to 228; the sequence is EQEQEALVNRLWKRMDKLEAEKRILQEKL. Phosphoserine occurs at positions 233, 237, 242, 247, 277, and 316. The interval 335 to 362 is disordered; that stretch reads AQGLRPRTVSSPIPYTPSPSSSRPISPG. At T342 the chain carries Phosphothreonine. The span at 344–361 shows a compositional bias: low complexity; it reads SSPIPYTPSPSSSRPISP. Phosphoserine occurs at positions 356 and 360. R380 carries the omega-N-methylarginine modification. Phosphoserine is present on residues S388 and S406. The segment at 394 to 469 is disordered; sequence QHMGASHGIT…QHPVHPSSQP (76 aa). Pro residues predominate over residues 419 to 444; the sequence is PTPPPSPNTQSPVQPPPPPPPPPMQP. The SH3-binding signature appears at 435–444; it reads PPPPPPPMQP. Over residues 460–469 the composition is skewed to low complexity; sequence QHPVHPSSQP.

The protein localises to the cytoplasm. It is found in the cytoskeleton. In Mus musculus (Mouse), this protein is Coiled-coil domain-containing protein 6 (Ccdc6).